A 291-amino-acid polypeptide reads, in one-letter code: Probable S-adenosylmethionine-dependent methyltransferase CRG1 (291 aa).

The protein belongs to the methyltransferase superfamily.

It localises to the cytoplasm. Functionally, probable S-adenosylmethionine-dependent methyltransferase which mediates cantharidin resistance. This Saccharomyces cerevisiae (strain ATCC 204508 / S288c) (Baker's yeast) protein is Probable S-adenosylmethionine-dependent methyltransferase CRG1 (CRG1).